The sequence spans 89 residues: Small ribosomal subunit protein uS15 (89 aa).

It belongs to the universal ribosomal protein uS15 family. In terms of assembly, part of the 30S ribosomal subunit. Forms a bridge to the 50S subunit in the 70S ribosome, contacting the 23S rRNA.

One of the primary rRNA binding proteins, it binds directly to 16S rRNA where it helps nucleate assembly of the platform of the 30S subunit by binding and bridging several RNA helices of the 16S rRNA. In terms of biological role, forms an intersubunit bridge (bridge B4) with the 23S rRNA of the 50S subunit in the ribosome. This is Small ribosomal subunit protein uS15 from Arthrobacter sp. (strain FB24).